We begin with the raw amino-acid sequence, 485 residues long: Forkhead box protein N3 (485 aa).

A disordered region spans residues 1–21 (MGPVMPPSKKPESPGISVSSG). A phosphoserine mark is found at Ser83, Ser85, and Ser97. The interval 86-108 (PVQDLDDDTPPSPAHSDMPYDAR) is disordered. The fork-head DNA-binding region spans 114–210 (KPPYSFSCLI…QALKKTPYHS (97 aa)). A disordered region spans residues 315–454 (RTESEPSCGS…DEEMKEAAGS (140 aa)). Low complexity predominate over residues 338–359 (SSAKSSHARSTSPASDCVSSSS). Residues 382-404 (HESHSETEEDDRKCSPKEAKDAL) are compositionally biased toward basic and acidic residues. A compositionally biased stretch (basic residues) spans 412-424 (QHKKRQHFAKARK). Phosphoserine is present on Ser443.

Interacts through its C-terminus with the C-terminus of SNW1/SKIP.

The protein resides in the nucleus. Functionally, acts as a transcriptional repressor. May be involved in DNA damage-inducible cell cycle arrests (checkpoints). The sequence is that of Forkhead box protein N3 (FOXN3) from Sus scrofa (Pig).